A 350-amino-acid chain; its full sequence is Phenylalanine--tRNA ligase alpha subunit (350 aa).

A Mg(2+)-binding site is contributed by Glu-260.

This sequence belongs to the class-II aminoacyl-tRNA synthetase family. Phe-tRNA synthetase alpha subunit type 1 subfamily. As to quaternary structure, tetramer of two alpha and two beta subunits. The cofactor is Mg(2+).

It localises to the cytoplasm. The catalysed reaction is tRNA(Phe) + L-phenylalanine + ATP = L-phenylalanyl-tRNA(Phe) + AMP + diphosphate + H(+). The chain is Phenylalanine--tRNA ligase alpha subunit from Mesoplasma florum (strain ATCC 33453 / NBRC 100688 / NCTC 11704 / L1) (Acholeplasma florum).